Here is a 354-residue protein sequence, read N- to C-terminus: Uroporphyrinogen decarboxylase (354 aa).

Substrate contacts are provided by residues 27–31 (RQAGR), Asp-77, Tyr-154, Ser-209, and His-327.

It belongs to the uroporphyrinogen decarboxylase family. Homodimer.

It is found in the cytoplasm. The catalysed reaction is uroporphyrinogen III + 4 H(+) = coproporphyrinogen III + 4 CO2. Its pathway is porphyrin-containing compound metabolism; protoporphyrin-IX biosynthesis; coproporphyrinogen-III from 5-aminolevulinate: step 4/4. Functionally, catalyzes the decarboxylation of four acetate groups of uroporphyrinogen-III to yield coproporphyrinogen-III. This is Uroporphyrinogen decarboxylase from Pseudoalteromonas translucida (strain TAC 125).